We begin with the raw amino-acid sequence, 357 residues long: DNA replication and repair protein RecF (357 aa).

30–37 (GANGSGKT) is an ATP binding site.

The protein belongs to the RecF family.

It is found in the cytoplasm. Functionally, the RecF protein is involved in DNA metabolism; it is required for DNA replication and normal SOS inducibility. RecF binds preferentially to single-stranded, linear DNA. It also seems to bind ATP. The polypeptide is DNA replication and repair protein RecF (Escherichia fergusonii (strain ATCC 35469 / DSM 13698 / CCUG 18766 / IAM 14443 / JCM 21226 / LMG 7866 / NBRC 102419 / NCTC 12128 / CDC 0568-73)).